A 208-amino-acid polypeptide reads, in one-letter code: Outer-membrane lipoprotein carrier protein (208 aa).

The signal sequence occupies residues 1–21 (MKKLNTLLLVLGSLVATPSFA). A disordered region spans residues 188 to 208 (KSTFEFTPPEGVEIDDQSNGE). Over residues 199-208 (VEIDDQSNGE) the composition is skewed to acidic residues.

The protein belongs to the LolA family. Monomer.

It localises to the periplasm. In terms of biological role, participates in the translocation of lipoproteins from the inner membrane to the outer membrane. Only forms a complex with a lipoprotein if the residue after the N-terminal Cys is not an aspartate (The Asp acts as a targeting signal to indicate that the lipoprotein should stay in the inner membrane). The polypeptide is Outer-membrane lipoprotein carrier protein (Pseudoalteromonas translucida (strain TAC 125)).